The following is a 316-amino-acid chain: 4-hydroxy-3-methylbut-2-enyl diphosphate reductase (316 aa).

Cys12 is a binding site for [4Fe-4S] cluster. His41 and His74 together coordinate (2E)-4-hydroxy-3-methylbut-2-enyl diphosphate. Residues His41 and His74 each coordinate dimethylallyl diphosphate. Isopentenyl diphosphate is bound by residues His41 and His74. Cys96 is a [4Fe-4S] cluster binding site. His124 lines the (2E)-4-hydroxy-3-methylbut-2-enyl diphosphate pocket. His124 serves as a coordination point for dimethylallyl diphosphate. Isopentenyl diphosphate is bound at residue His124. Glu126 functions as the Proton donor in the catalytic mechanism. Thr167 is a binding site for (2E)-4-hydroxy-3-methylbut-2-enyl diphosphate. Cys197 lines the [4Fe-4S] cluster pocket. (2E)-4-hydroxy-3-methylbut-2-enyl diphosphate is bound by residues Ser225, Ser226, Asn227, and Ser269. 4 residues coordinate dimethylallyl diphosphate: Ser225, Ser226, Asn227, and Ser269. Isopentenyl diphosphate contacts are provided by Ser225, Ser226, Asn227, and Ser269.

The protein belongs to the IspH family. Homodimer. It depends on [4Fe-4S] cluster as a cofactor.

The enzyme catalyses isopentenyl diphosphate + 2 oxidized [2Fe-2S]-[ferredoxin] + H2O = (2E)-4-hydroxy-3-methylbut-2-enyl diphosphate + 2 reduced [2Fe-2S]-[ferredoxin] + 2 H(+). It carries out the reaction dimethylallyl diphosphate + 2 oxidized [2Fe-2S]-[ferredoxin] + H2O = (2E)-4-hydroxy-3-methylbut-2-enyl diphosphate + 2 reduced [2Fe-2S]-[ferredoxin] + 2 H(+). It functions in the pathway isoprenoid biosynthesis; dimethylallyl diphosphate biosynthesis; dimethylallyl diphosphate from (2E)-4-hydroxy-3-methylbutenyl diphosphate: step 1/1. It participates in isoprenoid biosynthesis; isopentenyl diphosphate biosynthesis via DXP pathway; isopentenyl diphosphate from 1-deoxy-D-xylulose 5-phosphate: step 6/6. Catalyzes the conversion of 1-hydroxy-2-methyl-2-(E)-butenyl 4-diphosphate (HMBPP) into a mixture of isopentenyl diphosphate (IPP) and dimethylallyl diphosphate (DMAPP). Acts in the terminal step of the DOXP/MEP pathway for isoprenoid precursor biosynthesis. The sequence is that of 4-hydroxy-3-methylbut-2-enyl diphosphate reductase from Cronobacter sakazakii (strain ATCC BAA-894) (Enterobacter sakazakii).